Reading from the N-terminus, the 156-residue chain is Jun dimerization protein 2 (156 aa).

A disordered region spans residues K56–T95. The region spanning D70–H133 is the bZIP domain. A basic motif region spans residues R72 to R94. The segment at L98–L126 is leucine-zipper.

The protein belongs to the bZIP family. ATF subfamily.

It localises to the nucleus. Component of the AP-1 transcription factor that represses transactivation mediated by the Jun family of proteins. This chain is Jun dimerization protein 2 (jdp2), found in Danio rerio (Zebrafish).